Consider the following 216-residue polypeptide: Thiopurine S-methyltransferase (216 aa).

Residues Trp10, Leu45, Glu66, and Arg123 each coordinate S-adenosyl-L-methionine.

The protein belongs to the class I-like SAM-binding methyltransferase superfamily. TPMT family.

It localises to the cytoplasm. The catalysed reaction is S-adenosyl-L-methionine + a thiopurine = S-adenosyl-L-homocysteine + a thiopurine S-methylether.. The sequence is that of Thiopurine S-methyltransferase from Pseudomonas entomophila (strain L48).